The following is a 121-amino-acid chain: Large ribosomal subunit protein bL12 (121 aa).

It belongs to the bacterial ribosomal protein bL12 family. As to quaternary structure, homodimer. Part of the ribosomal stalk of the 50S ribosomal subunit. Forms a multimeric L10(L12)X complex, where L10 forms an elongated spine to which 2 to 4 L12 dimers bind in a sequential fashion. Binds GTP-bound translation factors.

Its function is as follows. Forms part of the ribosomal stalk which helps the ribosome interact with GTP-bound translation factors. Is thus essential for accurate translation. This is Large ribosomal subunit protein bL12 from Proteus mirabilis (strain HI4320).